The following is a 37-amino-acid chain: Large ribosomal subunit protein bL36 (37 aa).

The protein belongs to the bacterial ribosomal protein bL36 family.

In Desulfotalea psychrophila (strain LSv54 / DSM 12343), this protein is Large ribosomal subunit protein bL36.